The sequence spans 248 residues: DNA repair protein RecO (248 aa).

Belongs to the RecO family.

Functionally, involved in DNA repair and RecF pathway recombination. This is DNA repair protein RecO from Bacillus mycoides (strain KBAB4) (Bacillus weihenstephanensis).